A 388-amino-acid chain; its full sequence is Regulator of G-protein signaling 20 (388 aa).

The interval 138 to 199 (PGRPSGGRPL…TPGAAPGQPG (62 aa)) is disordered. Residues 185–197 (PAAQDTPGAAPGQ) are compositionally biased toward low complexity. In terms of domain architecture, RGS spans 262–378 (SFDKLMVTPA…MNSAVYKDLL (117 aa)).

In terms of assembly, forms a complex with G(alpha)z/i2 subunits and mu-opioid receptors; the formation of this complex results in mu-opioid receptor desensitization. Interacts with OPRM1. Fatty acylated. Heavily palmitoylated in the cysteine string motif. In terms of processing, N- and O-glycosylated in synapsomal membranes. Post-translationally, serine phosphorylated in synapsomal membranes. Sumoylated with SUMO1 and SUMO2 in synaptosomes. The sumoylated forms act as a scaffold for sequestering mu-opioid receptor-activated G(alpha) subunits. In terms of tissue distribution, isoform 5 is expressed in brain at high levels in the caudate nucleus and temporal lobe.

Its subcellular location is the membrane. It localises to the nucleus. It is found in the cytoplasm. In terms of biological role, inhibits signal transduction by increasing the GTPase activity of G protein alpha subunits thereby driving them into their inactive GDP-bound form. Binds selectively to G(z)-alpha and G(alpha)-i2 subunits, accelerates their GTPase activity and regulates their signaling activities. The G(z)-alpha activity is inhibited by the phosphorylation and palmitoylation of the G-protein. Negatively regulates mu-opioid receptor-mediated activation of the G-proteins. The sequence is that of Regulator of G-protein signaling 20 (RGS20) from Homo sapiens (Human).